The following is a 125-amino-acid chain: Large ribosomal subunit protein bL12 (125 aa).

The protein belongs to the bacterial ribosomal protein bL12 family. In terms of assembly, homodimer. Part of the ribosomal stalk of the 50S ribosomal subunit. Forms a multimeric L10(L12)X complex, where L10 forms an elongated spine to which 2 to 4 L12 dimers bind in a sequential fashion. Binds GTP-bound translation factors.

In terms of biological role, forms part of the ribosomal stalk which helps the ribosome interact with GTP-bound translation factors. Is thus essential for accurate translation. This chain is Large ribosomal subunit protein bL12, found in Francisella tularensis subsp. novicida (strain U112).